A 462-amino-acid polypeptide reads, in one-letter code: Na(+)/H(+) antiporter NhaA (462 aa).

11 helical membrane-spanning segments follow: residues 24–44 (ISGLIMLGFALAGLVLANLPL), 66–86 (LPIGHWAQDGLLTIFFLTVGL), 102–122 (AAAVPMLCAVGGMITPPILFL), 156–176 (GWAVPTATDIAFSLAVLALFA), 196–216 (LLAIILIAVFFSSVNAWYWFI), 235–255 (PWIAVGVVGILAWIMMFEAGI), 256–275 (HPTLAGVLVGLLTPARVMHG), 290–310 (PFSALLALPIFALFATGVHFE), 312–332 (MSPLLLLSPLVIALIVALVVG), 361–381 (MIPAAVACGIGFTVSFLIASL), and 392–412 (ARFGVLVASLIAAAISGVLLS).

The protein belongs to the NhaA Na(+)/H(+) (TC 2.A.33) antiporter family.

It is found in the cell membrane. It catalyses the reaction Na(+)(in) + 2 H(+)(out) = Na(+)(out) + 2 H(+)(in). In terms of biological role, na(+)/H(+) antiporter that extrudes sodium in exchange for external protons. The protein is Na(+)/H(+) antiporter NhaA of Bifidobacterium breve (strain NCIMB 8807 / UCC2003).